A 222-amino-acid chain; its full sequence is Triosephosphate isomerase (222 aa).

9 to 11 (NYK) contributes to the substrate binding site. The active-site Electrophile is His93. Catalysis depends on Glu141, which acts as the Proton acceptor. Substrate-binding positions include Ile146, Gly181, and 202 to 203 (AS).

The protein belongs to the triosephosphate isomerase family. As to quaternary structure, homotetramer; dimer of dimers.

Its subcellular location is the cytoplasm. The enzyme catalyses D-glyceraldehyde 3-phosphate = dihydroxyacetone phosphate. The protein operates within carbohydrate biosynthesis; gluconeogenesis. It participates in carbohydrate degradation; glycolysis; D-glyceraldehyde 3-phosphate from glycerone phosphate: step 1/1. In terms of biological role, involved in the gluconeogenesis. Catalyzes stereospecifically the conversion of dihydroxyacetone phosphate (DHAP) to D-glyceraldehyde-3-phosphate (G3P). This is Triosephosphate isomerase from Methanosarcina mazei (strain ATCC BAA-159 / DSM 3647 / Goe1 / Go1 / JCM 11833 / OCM 88) (Methanosarcina frisia).